We begin with the raw amino-acid sequence, 275 residues long: Penicillin-insensitive murein endopeptidase (275 aa).

The signal sequence occupies residues 1–19 (MKNWIVGMVALVTMVPVMA). Intrachain disulfides connect cysteine 44/cysteine 264, cysteine 187/cysteine 235, and cysteine 216/cysteine 223. Histidine 110, histidine 113, aspartate 120, aspartate 147, and histidine 211 together coordinate Zn(2+). A disordered region spans residues 227–262 (DTPPPGDGCGAELESWFQPPPPSAKPGKTLPPPLPP). Pro residues predominate over residues 244–262 (QPPPPSAKPGKTLPPPLPP).

Belongs to the peptidase M74 family. In terms of assembly, dimer. Requires Zn(2+) as cofactor.

The protein localises to the periplasm. Murein endopeptidase that cleaves the D-alanyl-meso-2,6-diamino-pimelyl amide bond that connects peptidoglycan strands. Likely plays a role in the removal of murein from the sacculus. The protein is Penicillin-insensitive murein endopeptidase of Yersinia pestis bv. Antiqua (strain Antiqua).